The sequence spans 639 residues: Chaperone protein HtpG (639 aa).

Positions 1–343 are a; substrate-binding; sequence MEATATKEHL…SNDLPLNVSR (343 aa). Positions 344–564 are b; sequence EILQESKDIE…THDMSGNLER (221 aa). Positions 565 to 639 are c; it reads LLKSAGQKVT…QLFLSTGSKE (75 aa).

This sequence belongs to the heat shock protein 90 family. Homodimer.

The protein resides in the cytoplasm. In terms of biological role, molecular chaperone. Has ATPase activity. This Nitrosospira multiformis (strain ATCC 25196 / NCIMB 11849 / C 71) protein is Chaperone protein HtpG.